Consider the following 316-residue polypeptide: M-phase inducer phosphatase cdc-25.3 (316 aa).

The segment at Q35 to G65 is disordered. Residues H39 to S50 are compositionally biased toward low complexity. The region spanning F136 to K242 is the Rhodanese domain.

Belongs to the MPI phosphatase family.

The catalysed reaction is O-phospho-L-tyrosyl-[protein] + H2O = L-tyrosyl-[protein] + phosphate. This is M-phase inducer phosphatase cdc-25.3 (cdc-25.3) from Caenorhabditis elegans.